The chain runs to 75 residues: DNA-directed RNA polymerase subunit omega (75 aa).

Belongs to the RNA polymerase subunit omega family. In terms of assembly, in cyanobacteria the RNAP catalytic core is composed of 2 alpha, 1 beta, 1 beta', 1 gamma and 1 omega subunit. When a sigma factor is associated with the core the holoenzyme is formed, which can initiate transcription.

It catalyses the reaction RNA(n) + a ribonucleoside 5'-triphosphate = RNA(n+1) + diphosphate. Functionally, promotes RNA polymerase assembly. Latches the N- and C-terminal regions of the beta' subunit thereby facilitating its interaction with the beta and alpha subunits. This chain is DNA-directed RNA polymerase subunit omega, found in Microcystis aeruginosa (strain NIES-843 / IAM M-2473).